A 345-amino-acid chain; its full sequence is Uroporphyrinogen decarboxylase (345 aa).

Substrate is bound by residues 30 to 34 (RQAGR), D79, Y154, S209, and H322.

Belongs to the uroporphyrinogen decarboxylase family. Homodimer.

The protein localises to the cytoplasm. The enzyme catalyses uroporphyrinogen III + 4 H(+) = coproporphyrinogen III + 4 CO2. It functions in the pathway porphyrin-containing compound metabolism; protoporphyrin-IX biosynthesis; coproporphyrinogen-III from 5-aminolevulinate: step 4/4. Functionally, catalyzes the decarboxylation of four acetate groups of uroporphyrinogen-III to yield coproporphyrinogen-III. This is Uroporphyrinogen decarboxylase from Nocardioides sp. (strain ATCC BAA-499 / JS614).